The primary structure comprises 45 residues: MHYGSKGWYVAELKKQGITHHEGRKLQSYKTYFLANLLESKKKQS.

This is an uncharacterized protein from Bacillus subtilis (strain 168).